The primary structure comprises 258 residues: Phosphate import ATP-binding protein PstB (258 aa).

In terms of domain architecture, ABC transporter spans I5–K247. An ATP-binding site is contributed by G37–S44.

This sequence belongs to the ABC transporter superfamily. Phosphate importer (TC 3.A.1.7) family. The complex is composed of two ATP-binding proteins (PstB), two transmembrane proteins (PstC and PstA) and a solute-binding protein (PstS).

The protein localises to the cell membrane. It carries out the reaction phosphate(out) + ATP + H2O = ADP + 2 phosphate(in) + H(+). Its function is as follows. Part of the ABC transporter complex PstSACB involved in phosphate import. Responsible for energy coupling to the transport system. The sequence is that of Phosphate import ATP-binding protein PstB from Frankia casuarinae (strain DSM 45818 / CECT 9043 / HFP020203 / CcI3).